Here is a 773-residue protein sequence, read N- to C-terminus: LON peptidase N-terminal domain and RING finger protein 1 (773 aa).

The tract at residues 1-29 is disordered; that stretch reads MSSPAVARTSPGGSREMAPAPQGRGRFWE. A TPR 1 repeat occupies 48 to 81; it reads WELLLRRGELLALGGHLKGALEAFAAALRRGAPA. An RING-type 1 zinc finger spans residues 123 to 159; it reads CLGCRGFLSEPVTVPCGHSYCRRCLRRELRARCRLCR. TPR repeat units lie at residues 212–244, 246–278, and 279–312; these read ARAA…EPSD, IVKI…LPDW, and PEVY…DEDF. The segment covering 359-370 has biased composition (polar residues); the sequence is EESQSLNEPSPK. The tract at residues 359–388 is disordered; that stretch reads EESQSLNEPSPKQSEEIPEVTSEPVKGSLN. Position 431 is a phosphoserine (Ser-431). The RING-type 2 zinc-finger motif lies at 479–517; the sequence is CSLCMRLFFEPVTTPCGHSFCKNCLERCLDHAPYCPLCK. Residues 558-768 enclose the Lon N-terminal domain; sequence TAELSHLTKN…KIQHILTYFS (211 aa).

This Homo sapiens (Human) protein is LON peptidase N-terminal domain and RING finger protein 1 (LONRF1).